Reading from the N-terminus, the 553-residue chain is Copine-9 (553 aa).

C2 domains follow at residues 1–125 (MSLS…ERPL) and 132–255 (KCGT…FTVY). Ca(2+)-binding residues include Asp163, Asp169, Asp225, Asp227, and Asp233. A VWFA domain is found at 299–500 (NFTVAIDFTA…VQFVPFRDYV (202 aa)). The tract at residues 531-553 (TRDIQPRPPPPVSPNPTPAPEQP) is disordered. Residues 536-553 (PRPPPPVSPNPTPAPEQP) show a composition bias toward pro residues.

The protein belongs to the copine family. The cofactor is Ca(2+).

Probable calcium-dependent phospholipid-binding protein that may play a role in calcium-mediated intracellular processes. Plays a role in dendrite formation by melanocytes. The sequence is that of Copine-9 from Mus musculus (Mouse).